The primary structure comprises 1091 residues: Rho GTPase-activating protein 7 (1091 aa).

An SAM domain is found at 11–78; it reads LTQIEAKEAC…LNKCAVMKLE (68 aa). Ser86, Ser89, and Ser129 each carry phosphoserine. Disordered stretches follow at residues 120 to 181, 296 to 329, 402 to 439, and 491 to 552; these read SPKQ…TTPR, RSVSNSTQTSSSSSQSETSSAVSTPSPVTRTRSL, RTGSFHGPGHLSLRRENSSDSPKELKRRNSSSSVSSRM, and SDEG…SGVG. Over residues 130 to 143 the composition is skewed to polar residues; sequence PDNSRLQSATSRES. Low complexity-rich tracts occupy residues 155–166 and 298–324; these read SSIRSLSSTSSS and VSNSTQTSSSSSQSETSSAVSTPSPVT. A focal adhesion-targeting (FAT) region spans residues 274–447; it reads QLNCVEISAL…RMSIYDNVPG (174 aa). Ser321 carries the phosphoserine modification. Positions 414–425 are enriched in basic and acidic residues; sequence LRRENSSDSPKE. The segment covering 499–511 has biased composition (polar residues); sequence ALDSVSPCPSSPK. The span at 513-525 shows a compositional bias: basic and acidic residues; that stretch reads IHLDVDHDRRTPS. Residues 526 to 535 show a composition bias toward polar residues; that stretch reads DLDSTGNSLN. A polybasic cluster (PBR) region spans residues 614 to 636; it reads KHGFSWAVPKFMKRIKVPDYKDR. Positions 641–847 constitute a Rho-GAP domain; that stretch reads VPLTVNVQRS…HMIAECKKLF (207 aa). Positions 877 to 1084 constitute an START domain; it reads SNDQPADYRH…RDSFSNQSTE (208 aa).

In terms of assembly, interacts with EF1A1, facilitates EF1A1 distribution to the membrane periphery and ruffles upon growth factor stimulation and suppresses cell migration. Interacts with tensin TNS1 (via N-terminus); the interaction is decreased by phosphorylation of TNS1. Interacts with TNS3 and PTEN; in resting cells, interacts with TNS3 (via C2 tensin-type domain) but, following growth factor stimulation, TNS3 and PTEN are phosphorylated which leads to weakened interaction with TNS3 and enhanced interaction with PTEN. Interacts (via C-terminus) with tensin TNS4 (via SH2 domain); the interaction is independent of tyrosine phosphorylation of DLC1.

It localises to the cytoplasm. Its subcellular location is the cell junction. The protein resides in the focal adhesion. It is found in the membrane. In terms of biological role, functions as a GTPase-activating protein for the small GTPases RHOA, RHOB, RHOC and CDC42, terminating their downstream signaling. This induces morphological changes and detachment through cytoskeletal reorganization, playing a critical role in biological processes such as cell migration and proliferation. Also functions in vivo as an activator of the phospholipase PLCD1. Active DLC1 increases cell migration velocity but reduces directionality. Required for growth factor-induced epithelial cell migration; in resting cells, interacts with TNS3 while PTEN interacts with the p85 regulatory subunit of the PI3K kinase complex but growth factor stimulation induces phosphorylation of TNS3 and PTEN, causing them to change their binding preference so that PTEN interacts with DLC1 and TNS3 interacts with p85. The PTEN-DLC1 complex translocates to the posterior of migrating cells to activate RHOA while the TNS3-p85 complex translocates to the leading edge of migrating cells to promote RAC1 activation. This is Rho GTPase-activating protein 7 (Dlc1) from Rattus norvegicus (Rat).